We begin with the raw amino-acid sequence, 300 residues long: N-acetylmuramic acid 6-phosphate etherase (300 aa).

Residues 55–217 (IAERLRAGGR…STGAMIRLGK (163 aa)) form the SIS domain. The active-site Proton donor is glutamate 83. Residue glutamate 114 is part of the active site.

The protein belongs to the GCKR-like family. MurNAc-6-P etherase subfamily. As to quaternary structure, homodimer.

It carries out the reaction N-acetyl-D-muramate 6-phosphate + H2O = N-acetyl-D-glucosamine 6-phosphate + (R)-lactate. Its pathway is amino-sugar metabolism; N-acetylmuramate degradation. Its function is as follows. Specifically catalyzes the cleavage of the D-lactyl ether substituent of MurNAc 6-phosphate, producing GlcNAc 6-phosphate and D-lactate. The sequence is that of N-acetylmuramic acid 6-phosphate etherase from Symbiobacterium thermophilum (strain DSM 24528 / JCM 14929 / IAM 14863 / T).